The chain runs to 268 residues: Leucyl/phenylalanyl-tRNA--protein transferase (268 aa).

The protein belongs to the L/F-transferase family.

Its subcellular location is the cytoplasm. It catalyses the reaction N-terminal L-lysyl-[protein] + L-leucyl-tRNA(Leu) = N-terminal L-leucyl-L-lysyl-[protein] + tRNA(Leu) + H(+). The enzyme catalyses N-terminal L-arginyl-[protein] + L-leucyl-tRNA(Leu) = N-terminal L-leucyl-L-arginyl-[protein] + tRNA(Leu) + H(+). The catalysed reaction is L-phenylalanyl-tRNA(Phe) + an N-terminal L-alpha-aminoacyl-[protein] = an N-terminal L-phenylalanyl-L-alpha-aminoacyl-[protein] + tRNA(Phe). In terms of biological role, functions in the N-end rule pathway of protein degradation where it conjugates Leu, Phe and, less efficiently, Met from aminoacyl-tRNAs to the N-termini of proteins containing an N-terminal arginine or lysine. This chain is Leucyl/phenylalanyl-tRNA--protein transferase, found in Zymomonas mobilis subsp. mobilis (strain ATCC 31821 / ZM4 / CP4).